Reading from the N-terminus, the 356-residue chain is Phosphate acyltransferase (356 aa).

This sequence belongs to the PlsX family. In terms of assembly, homodimer. Probably interacts with PlsY.

The protein resides in the cytoplasm. It catalyses the reaction a fatty acyl-[ACP] + phosphate = an acyl phosphate + holo-[ACP]. Its pathway is lipid metabolism; phospholipid metabolism. Its function is as follows. Catalyzes the reversible formation of acyl-phosphate (acyl-PO(4)) from acyl-[acyl-carrier-protein] (acyl-ACP). This enzyme utilizes acyl-ACP as fatty acyl donor, but not acyl-CoA. The polypeptide is Phosphate acyltransferase (Shigella boydii serotype 4 (strain Sb227)).